Consider the following 362-residue polypeptide: Putative HLA class I histocompatibility antigen, alpha chain H (362 aa).

The signal sequence occupies residues 1 to 24; that stretch reads MVLMAPRTLLLLLSGALALTQTWA. The interval 25-114 is alpha-1; it reads RSHSMRYFYT…ALRYYNQSEG (90 aa). Over 25–308 the chain is Extracellular; that stretch reads RSHSMRYFYT…EPSSQPTVPI (284 aa). Residue asparagine 110 is glycosylated (N-linked (GlcNAc...) asparagine). An alpha-2 region spans residues 115–206; it reads GSHTMQVMYG…ENGKETLQRA (92 aa). The alpha-3 stretch occupies residues 207–298; the sequence is DPPKTHMTHH…GLPEPLTLRW (92 aa). The 89-residue stretch at 209–297 folds into the Ig-like C1-type domain; it reads PKTHMTHHPI…EGLPEPLTLR (89 aa). Residues cysteine 227 and cysteine 283 are joined by a disulfide bond. The connecting peptide stretch occupies residues 299–308; the sequence is EPSSQPTVPI. The helical transmembrane segment at 309–332 threads the bilayer; sequence VGIVAGLVLLVAVVTGAVVAAVMW. The Cytoplasmic segment spans residues 333–362; sequence RKKSSDRKGGSYSQAASSNSAQGSDVSLTA. The interval 337-362 is disordered; it reads SDRKGGSYSQAASSNSAQGSDVSLTA. Residues 342–356 show a composition bias toward low complexity; that stretch reads GSYSQAASSNSAQGS.

It belongs to the MHC class I family. As to quaternary structure, heterodimer of an alpha chain and a beta chain (beta-2-microglobulin).

It localises to the cell membrane. Involved in the presentation of foreign antigens to the immune system. The chain is Putative HLA class I histocompatibility antigen, alpha chain H (HLA-H) from Homo sapiens (Human).